The sequence spans 330 residues: Induced myeloid leukemia cell differentiation protein Mcl-1 homolog (330 aa).

Residues 85–155 (LAVPPEEMAA…PPEEEDDELY (71 aa)) form a PEST-like region. Position 101 is a phosphoserine (S101). A Glycyl lysine isopeptide (Lys-Gly) (interchain with G-Cter in ubiquitin) cross-link involves residue K116. The interval 129–153 (EAAKSSGADGSLPSTPPPPEEEDDE) is disordered. S139 carries the phosphoserine; by GSK3-alpha and GSK3-beta modification. S142 carries the post-translational modification Phosphoserine. T143 is modified (phosphothreonine; by MAPK). Residues K174 and K177 each participate in a glycyl lysine isopeptide (Lys-Gly) (interchain with G-Cter in ubiquitin) cross-link. The short motif at 189–203 (ALETLRRVGDGVQRN) is the BH3 element. A BH1 motif is present at residues 232 to 252 (HVFKDGVTNWGRIVTLISFGA). A BH2 motif is present at residues 284-299 (DWLVKQRGWDGFVEFF). The chain crosses the membrane as a helical span at residues 307-329 (GIRNVLLAFAGVAGVGAGLAYLI).

It belongs to the Bcl-2 family. As to quaternary structure, interacts with HIF3A (via C-terminus domain). Interacts with BOK, BIK, BAX, BAK1, and TPT1. Interacts with unphosphorylated BAD. Interacts with BMF, BBC3 and PMAIP1. Interacts with BOP. Interacts with BCL2L11; may sequester BCL2L11 to prevent its pro-apoptotic activity. Interacts with GIMAP5 and HSPA8/HSC70; the interaction between HSPA8 and MCL1 is impaired in the absence of GIMAP5. Cleaved by CASP3 during apoptosis, yielding a pro-apoptotic C-terminal fragment. Post-translationally, rapidly degraded in the absence of phosphorylation in the PEST region. In terms of processing, phosphorylated on Ser-139, by GSK3, in response to IL3/interleukin-3 withdrawal. Phosphorylation at Ser-139 induces ubiquitination and proteasomal degradation, abrogating the anti-apoptotic activity. Treatment with taxol or okadaic acid induces phosphorylation on additional sites. Ubiquitinated. Ubiquitination is induced by phosphorylation at Ser-139. Deubiquitinated by USP20; leading to increased stability. In terms of tissue distribution, ubiquitous. Highly expressed in heart, spleen, lung, liver, skeletal muscle and kidney. Detected at lower levels in brain, ovary, oviduct and testis.

The protein localises to the membrane. It is found in the cytoplasm. It localises to the mitochondrion. The protein resides in the nucleus. Its subcellular location is the nucleoplasm. Its function is as follows. Involved in the regulation of apoptosis versus cell survival, and in the maintenance of viability but not of proliferation. Mediates its effects by interactions with a number of other regulators of apoptosis. The polypeptide is Induced myeloid leukemia cell differentiation protein Mcl-1 homolog (Mcl1) (Rattus norvegicus (Rat)).